The primary structure comprises 29 residues: Glucagon (29 aa).

Belongs to the glucagon family.

Its subcellular location is the secreted. Functionally, promotes hydrolysis of glycogen and lipids, and raises the blood sugar level. This Torpedo marmorata (Marbled electric ray) protein is Glucagon (gcg).